A 269-amino-acid chain; its full sequence is Putative pyruvate, phosphate dikinase regulatory protein (269 aa).

Residue 151 to 158 (GVSRSSKT) coordinates ADP.

It belongs to the pyruvate, phosphate/water dikinase regulatory protein family. PDRP subfamily.

It catalyses the reaction N(tele)-phospho-L-histidyl/L-threonyl-[pyruvate, phosphate dikinase] + ADP = N(tele)-phospho-L-histidyl/O-phospho-L-threonyl-[pyruvate, phosphate dikinase] + AMP + H(+). The catalysed reaction is N(tele)-phospho-L-histidyl/O-phospho-L-threonyl-[pyruvate, phosphate dikinase] + phosphate + H(+) = N(tele)-phospho-L-histidyl/L-threonyl-[pyruvate, phosphate dikinase] + diphosphate. Bifunctional serine/threonine kinase and phosphorylase involved in the regulation of the pyruvate, phosphate dikinase (PPDK) by catalyzing its phosphorylation/dephosphorylation. This chain is Putative pyruvate, phosphate dikinase regulatory protein, found in Geobacter metallireducens (strain ATCC 53774 / DSM 7210 / GS-15).